A 193-amino-acid polypeptide reads, in one-letter code: CASP-like protein 1E1 (193 aa).

Over 1–30 the chain is Cytoplasmic; that stretch reads MESQNKASLPVMDGLERRVVASQSEGASTC. A helical transmembrane segment spans residues 31–51; sequence DLLLRVLALVLTLAAAIVLGV. Residues 52–86 are Extracellular-facing; the sequence is DKQTKVVPIKIVDTLPAINLPVSAKWHYLSAFTYS. Residues 87-107 traverse the membrane as a helical segment; that stretch reads VASNAIACSYAALSLVLAVSG. Residues 108–113 are Cytoplasmic-facing; the sequence is KKGIMS. The chain crosses the membrane as a helical span at residues 114–134; that stretch reads IVIVLDLLMVAMLFSSNGAAL. At 135-162 the chain is on the extracellular side; sequence AIGLMGYQGNSHVRWTKVCHVFGRFCNQ. A helical membrane pass occupies residues 163–183; that stretch reads VAVSISLSLLGSILFLLLVGI. Topologically, residues 184-193 are cytoplasmic; the sequence is TSLRLHKKSK.

This sequence belongs to the Casparian strip membrane proteins (CASP) family. In terms of assembly, homodimer and heterodimers.

It is found in the cell membrane. The protein is CASP-like protein 1E1 of Populus trichocarpa (Western balsam poplar).